The sequence spans 592 residues: A-type ATP synthase subunit A (592 aa).

236–243 (GPFGSGKT) provides a ligand contact to ATP.

This sequence belongs to the ATPase alpha/beta chains family. As to quaternary structure, has multiple subunits with at least A(3), B(3), C, D, E, F, H, I and proteolipid K(x).

The protein localises to the cell membrane. The catalysed reaction is ATP + H2O + 4 H(+)(in) = ADP + phosphate + 5 H(+)(out). In terms of biological role, component of the A-type ATP synthase that produces ATP from ADP in the presence of a proton gradient across the membrane. The A chain is the catalytic subunit. The sequence is that of A-type ATP synthase subunit A from Methanopyrus kandleri (strain AV19 / DSM 6324 / JCM 9639 / NBRC 100938).